The following is a 170-amino-acid chain: Odorant-binding protein 2a (170 aa).

The signal sequence occupies residues 1 to 15 (MKTLFLGVTLGLAAA). A disulfide bridge connects residues cysteine 74 and cysteine 166.

The protein belongs to the calycin superfamily. Lipocalin family. Monomer. Strongly expressed in the nasal structures, salivary and lachrymal glands, and lung. Expressed in the liver.

It is found in the secreted. Functionally, binds and transports small hydrophobic volatile molecules with a higher affinity for aldehydes and large fatty acids, including undecanal, palmitic acid, efficient aldehydes, benzenic aldehydes, heterocyclic aldehydes and aliphatic acids. In Homo sapiens (Human), this protein is Odorant-binding protein 2a (OBP2A).